The following is a 298-amino-acid chain: Lipoyl synthase (298 aa).

[4Fe-4S] cluster is bound by residues Cys40, Cys45, Cys51, Cys67, Cys71, Cys74, and Ser280. Positions 53-269 constitute a Radical SAM core domain; the sequence is AVRKTATFMI…KEIALSKGFS (217 aa).

The protein belongs to the radical SAM superfamily. Lipoyl synthase family. [4Fe-4S] cluster serves as cofactor.

Its subcellular location is the cytoplasm. It carries out the reaction [[Fe-S] cluster scaffold protein carrying a second [4Fe-4S](2+) cluster] + N(6)-octanoyl-L-lysyl-[protein] + 2 oxidized [2Fe-2S]-[ferredoxin] + 2 S-adenosyl-L-methionine + 4 H(+) = [[Fe-S] cluster scaffold protein] + N(6)-[(R)-dihydrolipoyl]-L-lysyl-[protein] + 4 Fe(3+) + 2 hydrogen sulfide + 2 5'-deoxyadenosine + 2 L-methionine + 2 reduced [2Fe-2S]-[ferredoxin]. It participates in protein modification; protein lipoylation via endogenous pathway; protein N(6)-(lipoyl)lysine from octanoyl-[acyl-carrier-protein]. In terms of biological role, catalyzes the radical-mediated insertion of two sulfur atoms into the C-6 and C-8 positions of the octanoyl moiety bound to the lipoyl domains of lipoate-dependent enzymes, thereby converting the octanoylated domains into lipoylated derivatives. The sequence is that of Lipoyl synthase from Bacillus anthracis (strain A0248).